We begin with the raw amino-acid sequence, 116 residues long: Propanediol dehydratase-reactivating factor small subunit (116 aa).

A Mg(2+)-binding site is contributed by Glu-31.

It belongs to the DdrB/PduH family. In terms of assembly, forms a heterotetramer PduG(2)/PduH(2). The cofactor is Mg(2+).

It localises to the bacterial microcompartment. The enzyme catalyses ATP + H2O = ADP + phosphate + H(+). Its pathway is polyol metabolism; 1,2-propanediol degradation. In terms of biological role, small subunit of the propanediol dehydratase-reactivating factor (DDR), which reactivates suicidally inhibited adenosylcobalamin-dependent propanediol dehydratase (diol dehydratase, DDH) found in the bacterial microcompartment (BMC) dedicated to 1,2-propanediol (1,2-PD) degradation. Reactivates inactivated DDH in the presence of ATP, Mg(2+) and free adenosylcobalamin (AdoCbl), by mediating the exchange of the tightly bound damaged cofactor AdoCbl for a free intact one. Expression of a cosmid containing the full 21-gene pdu operon in E.coli allows E.coli to grow on 1,2-propanediol (1,2-PD) with the appearance of bacterial microcompartments (BMC) in its cytoplasm. Functionally, the 1,2-PD-specific bacterial microcompartment (BMC) concentrates low levels of 1,2-PD catabolic enzymes, concentrates volatile reaction intermediates thus enhancing pathway flux and keeps the level of toxic, mutagenic propionaldehyde low. This is Propanediol dehydratase-reactivating factor small subunit from Citrobacter freundii.